A 295-amino-acid chain; its full sequence is MPSLTHVEPIEKLSDAVTRILGHNPGPFTLQGTNTYLLGTGAKKILVDTGEPNVTEYISALKSVLASTNSHIEYIVITHWHGDHVGGIDNITDEILDKKKIPIYKMKRDKDEGVERFHYVDDGFEVAVDGATLKLIATPGHTADHFSLWLQEERALFSGDCILGEGTTVFEDLHDYMTSLQKIKDLNATRIYPGHGPVIDKVVEKVDEYIEHRMKREREIIKVLKEHEEITSMDVTNQVYADSPWAVRLAALNNVKLVLKKLCKDGVVENPHFETFKWIGGSSSGEEKKNESSNL.

7 residues coordinate Zn(2+): His-79, His-81, Asp-83, His-84, His-141, Asp-160, and His-195.

It belongs to the metallo-beta-lactamase superfamily. Glyoxalase II family.

The sequence is that of Beta-lactamase-like protein 2 homolog from Caenorhabditis elegans.